A 252-amino-acid chain; its full sequence is Ribose-5-phosphate isomerase (252 aa).

It belongs to the ribose 5-phosphate isomerase family.

It is found in the cytoplasm. The catalysed reaction is aldehydo-D-ribose 5-phosphate = D-ribulose 5-phosphate. It functions in the pathway carbohydrate degradation; pentose phosphate pathway; D-ribose 5-phosphate from D-ribulose 5-phosphate (non-oxidative stage): step 1/1. The protein is Ribose-5-phosphate isomerase (RKI1) of Debaryomyces hansenii (strain ATCC 36239 / CBS 767 / BCRC 21394 / JCM 1990 / NBRC 0083 / IGC 2968) (Yeast).